Here is a 366-residue protein sequence, read N- to C-terminus: Protein disulfide isomerase-like 2-1 (366 aa).

Positions 1-29 (MATPQISRKALASLLLLVAAAAAVSTASA) are cleaved as a signal peptide. 2 Thioredoxin domains span residues 30 to 138 (DDVL…SEAA) and 139 to 257 (TNVK…EKCG). Catalysis depends on nucleophile residues C59, C62, C178, and C181. Intrachain disulfides connect C59-C62 and C178-C181.

This sequence belongs to the protein disulfide isomerase family.

It localises to the secreted. The enzyme catalyses Catalyzes the rearrangement of -S-S- bonds in proteins.. In terms of biological role, acts as a protein-folding catalyst that interacts with nascent polypeptides to catalyze the formation, isomerization, and reduction or oxidation of disulfide bonds. May play a role in storage protein biogenesis. The sequence is that of Protein disulfide isomerase-like 2-1 (PDIL2-1) from Oryza sativa subsp. japonica (Rice).